Here is a 447-residue protein sequence, read N- to C-terminus: Protein king tubby (447 aa).

The disordered stretch occupies residues 54–84 (GSPQNPDQILSNNSSSITMNSSRNNSNNMRS). The span at 62 to 84 (ILSNNSSSITMNSSRNNSNNMRS) shows a compositional bias: low complexity. Serine 136 is modified (phosphoserine). Over residues 168 to 182 (EGAAMEGSNGAANGS) the composition is skewed to low complexity. Residues 168–191 (EGAAMEGSNGAANGSGSVGGSGES) form a disordered region.

This sequence belongs to the TUB family.

It is found in the cytoplasm. The protein resides in the nucleus. It localises to the cell projection. Its subcellular location is the cilium membrane. The protein localises to the rhabdomere. The protein is Protein king tubby of Drosophila grimshawi (Hawaiian fruit fly).